The primary structure comprises 376 residues: Protein RecA (376 aa).

Residue 78–85 coordinates ATP; it reads GPESSGKT. Positions 355–376 are disordered; it reads PVELVPNVDFDDEADTEADAED. Positions 363-376 are enriched in acidic residues; that stretch reads DFDDEADTEADAED.

This sequence belongs to the RecA family.

It is found in the cytoplasm. In terms of biological role, can catalyze the hydrolysis of ATP in the presence of single-stranded DNA, the ATP-dependent uptake of single-stranded DNA by duplex DNA, and the ATP-dependent hybridization of homologous single-stranded DNAs. It interacts with LexA causing its activation and leading to its autocatalytic cleavage. The protein is Protein RecA of Corynebacterium glutamicum (strain R).